The chain runs to 400 residues: Argininosuccinate synthase (400 aa).

10–18 (AFSGGLDTT) contributes to the ATP binding site. Tyrosine 87 provides a ligand contact to L-citrulline. Position 117 (glycine 117) interacts with ATP. L-aspartate is bound by residues threonine 119, asparagine 123, and aspartate 124. Asparagine 123 contacts L-citrulline. 5 residues coordinate L-citrulline: arginine 127, serine 173, serine 182, glutamate 255, and tyrosine 267.

It belongs to the argininosuccinate synthase family. Type 1 subfamily. Homotetramer.

The protein localises to the cytoplasm. The enzyme catalyses L-citrulline + L-aspartate + ATP = 2-(N(omega)-L-arginino)succinate + AMP + diphosphate + H(+). It functions in the pathway amino-acid biosynthesis; L-arginine biosynthesis; L-arginine from L-ornithine and carbamoyl phosphate: step 2/3. The chain is Argininosuccinate synthase from Natronomonas pharaonis (strain ATCC 35678 / DSM 2160 / CIP 103997 / JCM 8858 / NBRC 14720 / NCIMB 2260 / Gabara) (Halobacterium pharaonis).